A 376-amino-acid polypeptide reads, in one-letter code: Proteasome-interacting protein CIC1 (376 aa).

Disordered regions lie at residues 1–29 (MAKKSNSKKSTPVSTPSKEKKKVIEKKSS) and 356–376 (RSSSELEKESSESEAVKKAKS). The interval 310–376 (ETHEDDMVTI…ESEAVKKAKS (67 aa)) is required for interaction with CDC4. Residues 357–376 (SSSELEKESSESEAVKKAKS) are compositionally biased toward basic and acidic residues.

Interacts with CDC4, PRE4, PRE6, RPT1 and SCL1 as part of the fully assembled 26S proteasome. Interacts with pre-ribosomal particles constituent NOP7.

It localises to the nucleus. Its subcellular location is the nucleolus. Functionally, an adapter protein that specifically links the 26S proteasome to its substrate CDC4 which is one of the substrate recognition subunits of the SCF E3 ubiquitin ligase complex. Required for turnover of cell cycle regulatory proteins CDC4 and GRR1. Required for synthesis and nuclear export of 60S ribosomal subunits. Required for vegetative growth. This chain is Proteasome-interacting protein CIC1 (CIC1), found in Saccharomyces cerevisiae (strain ATCC 204508 / S288c) (Baker's yeast).